Here is a 459-residue protein sequence, read N- to C-terminus: tRNA uridine(34) acetyltransferase (459 aa).

The segment at 1–278 is radical S-adenosyl-L-methionine (rSAM); that stretch reads MKKLSRTISG…VPPYVRISRV (278 aa). One can recognise a Radical SAM core domain in the interval 6–271; that stretch reads RTISGVTPVA…IADIKALVPP (266 aa). Residues cysteine 23, cysteine 27, and cysteine 30 each contribute to the [4Fe-4S] cluster site. Residue lysine 77 coordinates acetyl-CoA. The tract at residues 308–459 is N-acetyltransferase; the sequence is QKCRCIRCRE…VAGYMCKHLD (152 aa). Cysteine 310, cysteine 312, and cysteine 315 together coordinate Zn(2+). Residues 386-389, 409-411, and tyrosine 442 contribute to the acetyl-CoA site; these read ELHV and LGR.

This sequence belongs to the ELP3 family. In terms of assembly, homodimer. Requires [4Fe-4S] cluster as cofactor.

The enzyme catalyses uridine(34) in tRNA + acetyl-CoA + S-adenosyl-L-methionine + H2O = 5-(carboxymethyl)uridine(34) in tRNA + 5'-deoxyadenosine + L-methionine + CoA + 2 H(+). It participates in tRNA modification. In terms of biological role, tRNA uridine(34) acetyltransferase, which mediates formation of carboxymethyluridine in the wobble base at position 34 in tRNAs. The proposed mechanism is the following: (i) recruits S-adenosyl-L-methionine and cleaves it to generate a 5'-deoxyadenosine radical (5'-dA) in the radical S-adenosyl-L-methionine (rSAM) region, (ii) hydrolyzes acetyl-CoA in the N-acetyltransferase domain and (iii) an acetyl radical is formed by the products of the two domains and (iv) is transferred onto the C5 position of uridine(34) in the bound tRNA molecule. Does not show protein lysine acetyltransferase activity. The polypeptide is tRNA uridine(34) acetyltransferase (Dehalococcoides mccartyi (strain CBDB1)).